Here is a 279-residue protein sequence, read N- to C-terminus: Release factor glutamine methyltransferase (279 aa).

Positions 141 and 187 each coordinate S-adenosyl-L-methionine. 187–190 lines the substrate pocket; sequence NPPY.

Belongs to the protein N5-glutamine methyltransferase family. PrmC subfamily.

It carries out the reaction L-glutaminyl-[peptide chain release factor] + S-adenosyl-L-methionine = N(5)-methyl-L-glutaminyl-[peptide chain release factor] + S-adenosyl-L-homocysteine + H(+). In terms of biological role, methylates the class 1 translation termination release factors RF1/PrfA and RF2/PrfB on the glutamine residue of the universally conserved GGQ motif. This is Release factor glutamine methyltransferase from Corynebacterium glutamicum (strain ATCC 13032 / DSM 20300 / JCM 1318 / BCRC 11384 / CCUG 27702 / LMG 3730 / NBRC 12168 / NCIMB 10025 / NRRL B-2784 / 534).